A 564-amino-acid chain; its full sequence is uncharacterized protein (564 aa).

Residues 1–17 (MRRPSTASLTRTPSRAS) show a composition bias toward polar residues. Positions 1 to 564 (MRRPSTASLT…ASTPSSEVIS (564 aa)) are disordered. Low complexity-rich tracts occupy residues 79-97 (SPRT…RASP) and 114-134 (SPTG…ASPT). Residues 153–168 (RSPSTASLTRTPSRAS) are compositionally biased toward polar residues. The segment covering 170–179 (TRWPPRASPT) has biased composition (low complexity). Over residues 250 to 271 (GSPPRASPMTPPRASPRTPPRA) the composition is skewed to pro residues. Low complexity predominate over residues 272-299 (SPTTTPSRASLTRTPSWASPTTTPSRAS). Polar residues predominate over residues 318–351 (PTGTPSRASPTGTPSRASLTGSPSRASLTGTPSR). Positions 378-416 (RASLTGTSSTASLTRTPSRASLTRTQSSSSLTRTPSMAS) are enriched in low complexity. Residues 467–564 (SRASLTRTPS…ASTPSSEVIS (98 aa)) are compositionally biased toward polar residues.

This is an uncharacterized protein from Homo sapiens (Human).